The chain runs to 267 residues: MSQLSFNEASLIYPARGRDGAAQLVLDRINLSVSTGEFVVVIGRSGSGKTSLLNLAAGFQEPSEGKVALDGKIIEGPGSDRAVVFQDDALYPWLDARDNVAFPLRIKGMGERDRRARAGELLELVGLPEAGKRRIWELSGGMRQRVGIARALAAEPRFLLLDEPLGALDALTRSRLQTFLLDVWRKSRSGALLITHSIDEALLLATRIVVLSPNPGRVAADIPSSFAADILAGAPASEVRASPAFKRMHDGLTGLIQAIGPEEELAA.

The ABC transporter domain occupies 6–238 (FNEASLIYPA…DILAGAPASE (233 aa)). 43-50 (GRSGSGKT) lines the ATP pocket.

The protein belongs to the ABC transporter superfamily. Taurine importer (TC 3.A.1.17.1) family. The complex is composed of two ATP-binding proteins (TauB), two transmembrane proteins (TauC) and a solute-binding protein (TauA).

It localises to the cell inner membrane. The enzyme catalyses taurine(out) + ATP + H2O = taurine(in) + ADP + phosphate + H(+). In terms of biological role, part of the ABC transporter complex TauABC involved in taurine import. Responsible for energy coupling to the transport system. The polypeptide is Taurine import ATP-binding protein TauB (Sinorhizobium fredii (strain NBRC 101917 / NGR234)).